The following is a 466-amino-acid chain: Rho GTPase-activating protein 1 (466 aa).

Disordered stretches follow at residues 1–31 (MTEVLHFPSSPSASHSSSSSSSSPSPSSLSY) and 65–84 (EEQDLRRRSSTDGGEEDDGG). Low complexity predominate over residues 8 to 31 (PSSPSASHSSSSSSSSPSPSSLSY). Residues 65–74 (EEQDLRRRSS) show a composition bias toward basic and acidic residues. A CRIB domain is found at 117-130 (IGWPTNVRHVAHVT). A Rho-GAP domain is found at 162 to 342 (VSTESMQLSY…TLIEKTLRER (181 aa)). The disordered stretch occupies residues 354–402 (PLEPSDESGHQSPSQSLAFNTSEQSEETQSDNIENAENQSSSSEISDEL). 2 stretches are compositionally biased toward polar residues: residues 363–376 (HQSPSQSLAFNTSE) and 383–397 (SDNIENAENQSSSSE).

In terms of biological role, acts as a GTPase activator for the Rac-type GTPase by converting it to an inactive GDP-bound state. This chain is Rho GTPase-activating protein 1 (ROPGAP1), found in Arabidopsis thaliana (Mouse-ear cress).